The sequence spans 400 residues: Arabinan endo-1,5-alpha-L-arabinosidase B (400 aa).

The first 16 residues, 1-16 (MAVIFVLFFLVSMALS), serve as a signal peptide directing secretion. Residue Asn24 is glycosylated (N-linked (GlcNAc...) asparagine). Residue Asp70 is the Proton acceptor of the active site. Residue Asn184 is glycosylated (N-linked (GlcNAc...) asparagine). Catalysis depends on Glu277, which acts as the Proton donor. A glycan (N-linked (GlcNAc...) asparagine) is linked at Asn372.

This sequence belongs to the glycosyl hydrolase 43 family.

Its subcellular location is the secreted. It carries out the reaction Endohydrolysis of (1-&gt;5)-alpha-arabinofuranosidic linkages in (1-&gt;5)-arabinans.. It participates in glycan metabolism; L-arabinan degradation. Functionally, endo-1,5-alpha-L-arabinanase involved in degradation of pectin. Its preferred substrate is linear 1,5-alpha-L-arabinan. The protein is Arabinan endo-1,5-alpha-L-arabinosidase B (abnB) of Emericella nidulans (strain FGSC A4 / ATCC 38163 / CBS 112.46 / NRRL 194 / M139) (Aspergillus nidulans).